Here is a 682-residue protein sequence, read N- to C-terminus: DNA-directed RNA polymerase subunit beta' (682 aa).

Zn(2+)-binding residues include C69, C71, C87, and C90. Positions 489, 491, and 493 each coordinate Mg(2+).

The protein belongs to the RNA polymerase beta' chain family. RpoC1 subfamily. In plastids the minimal PEP RNA polymerase catalytic core is composed of four subunits: alpha, beta, beta', and beta''. When a (nuclear-encoded) sigma factor is associated with the core the holoenzyme is formed, which can initiate transcription. Mg(2+) serves as cofactor. It depends on Zn(2+) as a cofactor.

The protein resides in the plastid. It localises to the chloroplast. It carries out the reaction RNA(n) + a ribonucleoside 5'-triphosphate = RNA(n+1) + diphosphate. DNA-dependent RNA polymerase catalyzes the transcription of DNA into RNA using the four ribonucleoside triphosphates as substrates. This chain is DNA-directed RNA polymerase subunit beta', found in Brachypodium distachyon (Purple false brome).